Reading from the N-terminus, the 484-residue chain is Poly(A) RNA polymerase GLD2 (484 aa).

2 positions are modified to phosphoserine: Ser-62 and Ser-69. The short motif at 76-92 (KRISDEKAFRLDGKRQR) is the Nuclear localization signal element. Ser-95 bears the Phosphoserine mark. Mg(2+) contacts are provided by Asp-213 and Asp-215. The PAP-associated domain maps to 386 to 440 (SLGDLLLGFLKYYATEFDWNTQMISVREAKAIPRPDDMEWRNKYICVEEPFDGTN).

The protein belongs to the DNA polymerase type-B-like family. GLD2 subfamily. Interacts with CPEB1, CPEB2, CPSF1 and PABPC1. Interacts with QKI isoform QKI7; promoting recruitment to miRNA miR-122 and miR-122 stabilization. Mg(2+) is required as a cofactor. It depends on Mn(2+) as a cofactor.

The protein localises to the cytoplasm. It localises to the nucleus. It carries out the reaction RNA(n) + ATP = RNA(n)-3'-adenine ribonucleotide + diphosphate. Cytoplasmic poly(A) RNA polymerase that adds successive AMP monomers to the 3'-end of specific RNAs, forming a poly(A) tail. In contrast to the canonical nuclear poly(A) RNA polymerase, it only adds poly(A) to selected cytoplasmic mRNAs. Does not play a role in replication-dependent histone mRNA degradation. Adds a single nucleotide to the 3' end of specific miRNAs, monoadenylation stabilizes and prolongs the activity of some but not all miRNAs. The chain is Poly(A) RNA polymerase GLD2 from Rattus norvegicus (Rat).